Here is a 247-residue protein sequence, read N- to C-terminus: ATP synthase subunit a, chloroplastic (247 aa).

Helical transmembrane passes span 38–58 (QVLI…SIAV), 95–115 (VPFI…GALL), 134–154 (INTT…AGLT), 199–219 (LVVV…VMFL), and 220–240 (GLFT…AYIG).

The protein belongs to the ATPase A chain family. As to quaternary structure, F-type ATPases have 2 components, CF(1) - the catalytic core - and CF(0) - the membrane proton channel. CF(1) has five subunits: alpha(3), beta(3), gamma(1), delta(1), epsilon(1). CF(0) has four main subunits: a, b, b' and c.

The protein localises to the plastid. It localises to the chloroplast thylakoid membrane. Functionally, key component of the proton channel; it plays a direct role in the translocation of protons across the membrane. This Eucalyptus globulus subsp. globulus (Tasmanian blue gum) protein is ATP synthase subunit a, chloroplastic.